A 734-amino-acid polypeptide reads, in one-letter code: Oligopeptide transporter 2 (734 aa).

14 consecutive transmembrane segments (helical) span residues 44 to 64, 68 to 88, 125 to 145, 152 to 172, 211 to 231, 252 to 272, 283 to 303, 359 to 379, 414 to 434, 442 to 462, 525 to 545, 596 to 616, 644 to 664, and 677 to 697; these read MWFLGLLSCILLSFLNTFFGY, PLMITMISVQVVTLPLGKLMA, GAGFGSGTAYAVGIVDIIMAF, FLASWILVITTQILGYGWAGI, FFVIAFVCSFAWYIFPAYLFL, LGSGMSGLGIGAFALDWSVIA, FFAIVNVLVGYVLVMYMVIPI, FFAISYGIGFAAIVSTLTHVA, WWFYSLLAISLVLSLVLCIFM, WWGLLLASFMALTFTVPVSII, MFLVQFIGTVIAGTVNISVAW, YPALNWFFLGGLIGPVLVWLL, ATSVNFNCWIIVGVIFNYFVF, and VLSAALDAGLAFMGVLLYFSL.

The protein belongs to the oligopeptide OPT transporter (TC 2.A.67.1) family. Expressed in flowers, leaves, roots, and stems.

The protein localises to the membrane. Its function is as follows. Involved in the translocation of tetra- and pentapeptides across the cellular membrane in an energy-dependent manner. The polypeptide is Oligopeptide transporter 2 (OPT2) (Arabidopsis thaliana (Mouse-ear cress)).